The primary structure comprises 265 residues: Shikimate dehydrogenase (NADP(+)) (265 aa).

Shikimate contacts are provided by residues 14–16 (SLS) and Thr61. Lys65 functions as the Proton acceptor in the catalytic mechanism. The shikimate site is built by Asn85 and Asp100. Residues 123 to 127 (GAGGA), 146 to 151 (NRTESK), and Ala209 each bind NADP(+). Tyr211 contacts shikimate. Gly232 provides a ligand contact to NADP(+).

This sequence belongs to the shikimate dehydrogenase family. Homodimer.

It carries out the reaction shikimate + NADP(+) = 3-dehydroshikimate + NADPH + H(+). It participates in metabolic intermediate biosynthesis; chorismate biosynthesis; chorismate from D-erythrose 4-phosphate and phosphoenolpyruvate: step 4/7. Its function is as follows. Involved in the biosynthesis of the chorismate, which leads to the biosynthesis of aromatic amino acids. Catalyzes the reversible NADPH linked reduction of 3-dehydroshikimate (DHSA) to yield shikimate (SA). The chain is Shikimate dehydrogenase (NADP(+)) from Haloarcula marismortui (strain ATCC 43049 / DSM 3752 / JCM 8966 / VKM B-1809) (Halobacterium marismortui).